A 201-amino-acid chain; its full sequence is Recombination protein RecR (201 aa).

The C4-type zinc finger occupies 60–75 (CKTCGNIDTQNPCTVC). The 96-residue stretch at 83-178 (SIIVVVADVA…KVTRLAHGVP (96 aa)) folds into the Toprim domain.

Belongs to the RecR family.

In terms of biological role, may play a role in DNA repair. It seems to be involved in an RecBC-independent recombinational process of DNA repair. It may act with RecF and RecO. The polypeptide is Recombination protein RecR (Rhodopseudomonas palustris (strain HaA2)).